The following is a 520-amino-acid chain: T-box transcription factor TBX22 (520 aa).

The tract at residues 1 to 91 (MALSSRARAF…NSSESLEEKD (91 aa)) is disordered. A compositionally biased stretch (basic and acidic residues) spans 33-49 (PELREKKGGEEEEERRS). Positions 67-84 (STSASSGCGSDSGYGNSS) are enriched in low complexity. Positions 96 to 283 (LQGSELWKRF…RNPFAKGFRD (188 aa)) form a DNA-binding region, T-box.

As to expression, seems to be expressed at a low level.

The protein resides in the nucleus. Its function is as follows. Probable transcriptional regulator involved in developmental processes. This is major determinant crucial to palatogenesis. The chain is T-box transcription factor TBX22 (TBX22) from Homo sapiens (Human).